The following is an 885-amino-acid chain: Dipeptidyl peptidase 9 (885 aa).

Catalysis depends on charge relay system residues serine 752, aspartate 830, and histidine 862. Serine 752 is a Val-boroPro binding site.

The protein belongs to the peptidase S9B family. DPPIV subfamily. Homodimer. Forms a ternary complex with NLRP1, composed of a DPP9 homodimer, one full-length NLRP1 protein, and one cleaved C-terminus of NLRP1 (NACHT, LRR and PYD domains-containing protein 1, C-terminus).

The protein localises to the nucleus. It carries out the reaction Release of an N-terminal dipeptide, Xaa-Yaa-|-Zaa-, from a polypeptide, preferentially when Yaa is Pro, provided Zaa is neither Pro nor hydroxyproline.. Functionally, dipeptidyl peptidase that cleaves off N-terminal dipeptides from proteins having a Pro or Ala residue at position 2. Acts as a key inhibitor of the NLRP1 inflammasome. The polypeptide is Dipeptidyl peptidase 9 (Danio rerio (Zebrafish)).